Reading from the N-terminus, the 172-residue chain is Small ribosomal subunit protein uS5 (172 aa).

Residues 17 to 80 (LKEKMIAVNR…EEARRNMTKV (64 aa)) form the S5 DRBM domain.

This sequence belongs to the universal ribosomal protein uS5 family. Part of the 30S ribosomal subunit. Contacts proteins S4 and S8.

With S4 and S12 plays an important role in translational accuracy. In terms of biological role, located at the back of the 30S subunit body where it stabilizes the conformation of the head with respect to the body. This is Small ribosomal subunit protein uS5 from Polaromonas sp. (strain JS666 / ATCC BAA-500).